A 358-amino-acid chain; its full sequence is Phospho-N-acetylmuramoyl-pentapeptide-transferase (358 aa).

The next 9 membrane-spanning stretches (helical) occupy residues 13–35 (LLIL…IFIG), 81–101 (MGGV…NINL), 106–126 (LFLL…DDFL), 142–162 (FFLQ…KDLI), 171–191 (SWQI…LVGI), 201–221 (LDGL…TEIL), 228–248 (LIIF…FLKY), 268–290 (ILGS…GIFI), and 336–356 (IVEN…VLKI).

The protein belongs to the glycosyltransferase 4 family. MraY subfamily. The cofactor is Mg(2+).

It is found in the cell inner membrane. It carries out the reaction UDP-N-acetyl-alpha-D-muramoyl-L-alanyl-gamma-D-glutamyl-meso-2,6-diaminopimeloyl-D-alanyl-D-alanine + di-trans,octa-cis-undecaprenyl phosphate = di-trans,octa-cis-undecaprenyl diphospho-N-acetyl-alpha-D-muramoyl-L-alanyl-D-glutamyl-meso-2,6-diaminopimeloyl-D-alanyl-D-alanine + UMP. Its pathway is cell wall biogenesis; peptidoglycan biosynthesis. In terms of biological role, catalyzes the initial step of the lipid cycle reactions in the biosynthesis of the cell wall peptidoglycan: transfers peptidoglycan precursor phospho-MurNAc-pentapeptide from UDP-MurNAc-pentapeptide onto the lipid carrier undecaprenyl phosphate, yielding undecaprenyl-pyrophosphoryl-MurNAc-pentapeptide, known as lipid I. The polypeptide is Phospho-N-acetylmuramoyl-pentapeptide-transferase (Prochlorococcus marinus (strain MIT 9312)).